We begin with the raw amino-acid sequence, 163 residues long: Zinc finger A20 and AN1 domain-containing stress-associated protein 3 (163 aa).

The segment at 7-41 (LQEPRLCANNCGFFGSTATQNLCSKCFRDLQHQEQ) adopts an A20-type zinc-finger fold. Zn(2+) is bound by residues Cys13, Cys17, Cys29, and Cys32. A disordered region spans residues 57-101 (VGAAASSSVSPPPPPPADSKEIVEAKSEKRAAAEPEEADGPPQDP). The segment covering 74–89 (DSKEIVEAKSEKRAAA) has biased composition (basic and acidic residues). The AN1-type zinc finger occupies 98–144 (PQDPKRCLTCRRRVGITGFRCRCGFVFCGTHRYAEQHECSFDFKRMG). Zn(2+) is bound by residues Cys104, Cys107, Cys118, Cys120, Cys125, His128, His134, and Cys136.

Functionally, may be involved in environmental stress response. This Arabidopsis thaliana (Mouse-ear cress) protein is Zinc finger A20 and AN1 domain-containing stress-associated protein 3 (SAP3).